The sequence spans 138 residues: Thioredoxin H2-1 (138 aa).

Positions 1–20 (MGGAFSTSKPKPAAGEEGGE) are disordered. A Thioredoxin domain is found at 12 to 129 (PAAGEEGGES…LEKTINTLRS (118 aa)). Active-site nucleophile residues include cysteine 55 and cysteine 58. A disulfide bond links cysteine 55 and cysteine 58.

The protein belongs to the thioredoxin family. Plant H-type subfamily.

It localises to the cytoplasm. Probable thiol-disulfide oxidoreductase that may be involved in the redox regulation of a number of cytosolic enzymes. The chain is Thioredoxin H2-1 from Oryza sativa subsp. japonica (Rice).